A 61-amino-acid polypeptide reads, in one-letter code: Small ribosomal subunit protein uS14 (61 aa).

4 residues coordinate Zn(2+): C24, C27, C40, and C43.

This sequence belongs to the universal ribosomal protein uS14 family. Zinc-binding uS14 subfamily. As to quaternary structure, part of the 30S ribosomal subunit. Contacts proteins S3 and S10. Zn(2+) serves as cofactor.

Binds 16S rRNA, required for the assembly of 30S particles and may also be responsible for determining the conformation of the 16S rRNA at the A site. This chain is Small ribosomal subunit protein uS14, found in Desulfosudis oleivorans (strain DSM 6200 / JCM 39069 / Hxd3) (Desulfococcus oleovorans).